A 541-amino-acid polypeptide reads, in one-letter code: Membrane protein insertase YidC (541 aa).

The next 6 membrane-spanning stretches (helical) occupy residues 6–26 (NLLL…WESD), 326–346 (VVDY…LMFF), 349–369 (LVHN…GLLY), 420–440 (GGCL…WVLL), 457–477 (LSVQ…MWAM), and 500–520 (MIFT…WLVG).

It belongs to the OXA1/ALB3/YidC family. Type 1 subfamily. In terms of assembly, interacts with the Sec translocase complex via SecD. Specifically interacts with transmembrane segments of nascent integral membrane proteins during membrane integration.

It is found in the cell inner membrane. Required for the insertion and/or proper folding and/or complex formation of integral membrane proteins into the membrane. Involved in integration of membrane proteins that insert both dependently and independently of the Sec translocase complex, as well as at least some lipoproteins. Aids folding of multispanning membrane proteins. The sequence is that of Membrane protein insertase YidC from Shewanella amazonensis (strain ATCC BAA-1098 / SB2B).